Consider the following 413-residue polypeptide: Glutamyl-tRNA reductase (413 aa).

Residues 57 to 60 (TCNR), Ser-113, 118 to 120 (DFE), and Gln-124 contribute to the substrate site. Cys-58 functions as the Nucleophile in the catalytic mechanism. NADP(+) is bound at residue 193–198 (GTGKIG).

This sequence belongs to the glutamyl-tRNA reductase family. In terms of assembly, homodimer.

The catalysed reaction is (S)-4-amino-5-oxopentanoate + tRNA(Glu) + NADP(+) = L-glutamyl-tRNA(Glu) + NADPH + H(+). It participates in porphyrin-containing compound metabolism; protoporphyrin-IX biosynthesis; 5-aminolevulinate from L-glutamyl-tRNA(Glu): step 1/2. Catalyzes the NADPH-dependent reduction of glutamyl-tRNA(Glu) to glutamate 1-semialdehyde (GSA). This chain is Glutamyl-tRNA reductase, found in Flavobacterium psychrophilum (strain ATCC 49511 / DSM 21280 / CIP 103535 / JIP02/86).